The sequence spans 303 residues: N-acetyl-D-glucosamine kinase (303 aa).

Residues 4 to 11 (GFDIGGTK) and 133 to 140 (GVGGGLVL) each bind ATP. Zn(2+) contacts are provided by His-157, Cys-177, Cys-179, and Cys-184.

This sequence belongs to the ROK (NagC/XylR) family. NagK subfamily.

The enzyme catalyses N-acetyl-D-glucosamine + ATP = N-acetyl-D-glucosamine 6-phosphate + ADP + H(+). It participates in cell wall biogenesis; peptidoglycan recycling. In terms of biological role, catalyzes the phosphorylation of N-acetyl-D-glucosamine (GlcNAc) derived from cell-wall degradation, yielding GlcNAc-6-P. The chain is N-acetyl-D-glucosamine kinase from Salmonella choleraesuis (strain SC-B67).